The chain runs to 547 residues: Chaperonin GroEL (547 aa).

Residues 30-33 (TLGP), Lys51, 87-91 (DGTTT), Gly415, 479-481 (NAA), and Asp495 contribute to the ATP site. The disordered stretch occupies residues 525 to 547 (PKEDKPDLGGGNPGGAGGMGGMM). The span at 532-547 (LGGGNPGGAGGMGGMM) shows a compositional bias: gly residues.

Belongs to the chaperonin (HSP60) family. Forms a cylinder of 14 subunits composed of two heptameric rings stacked back-to-back. Interacts with the co-chaperonin GroES.

It localises to the cytoplasm. The catalysed reaction is ATP + H2O + a folded polypeptide = ADP + phosphate + an unfolded polypeptide.. In terms of biological role, together with its co-chaperonin GroES, plays an essential role in assisting protein folding. The GroEL-GroES system forms a nano-cage that allows encapsulation of the non-native substrate proteins and provides a physical environment optimized to promote and accelerate protein folding. The protein is Chaperonin GroEL of Blochmanniella floridana.